The chain runs to 423 residues: UPF0229 protein VV1_2091 (423 aa).

Positions 81 to 111 are disordered; it reads QFITGDKIERPKGGQGGGGAGDGDASADGEG. Residues 93–102 show a composition bias toward gly residues; the sequence is GGQGGGGAGD.

This sequence belongs to the UPF0229 family.

The sequence is that of UPF0229 protein VV1_2091 from Vibrio vulnificus (strain CMCP6).